The primary structure comprises 267 residues: tRNA pseudouridine synthase A (267 aa).

The Nucleophile role is filled by aspartate 52. Residue tyrosine 110 coordinates substrate.

Belongs to the tRNA pseudouridine synthase TruA family. As to quaternary structure, homodimer.

The enzyme catalyses uridine(38/39/40) in tRNA = pseudouridine(38/39/40) in tRNA. In terms of biological role, formation of pseudouridine at positions 38, 39 and 40 in the anticodon stem and loop of transfer RNAs. This chain is tRNA pseudouridine synthase A, found in Paraburkholderia phymatum (strain DSM 17167 / CIP 108236 / LMG 21445 / STM815) (Burkholderia phymatum).